Consider the following 429-residue polypeptide: Cell cycle protein kinase spo4 (429 aa).

The Protein kinase domain occupies 40 to 402; it reads YHVVKLVGAG…KAKTALQHEF (363 aa). Residues 46–54 and lysine 95 contribute to the ATP site; that span reads VGAGSFSSV. Aspartate 182 serves as the catalytic Proton acceptor. Threonine 264 is modified (phosphothreonine).

The protein belongs to the protein kinase superfamily. Ser/Thr protein kinase family. CDC7 subfamily. In terms of assembly, interacts with spo6.

It localises to the nucleus. It catalyses the reaction L-seryl-[protein] + ATP = O-phospho-L-seryl-[protein] + ADP + H(+). The enzyme catalyses L-threonyl-[protein] + ATP = O-phospho-L-threonyl-[protein] + ADP + H(+). Functionally, required for the initiation of meiosis II and progression through anaphase II. This chain is Cell cycle protein kinase spo4 (spo4), found in Schizosaccharomyces pombe (strain 972 / ATCC 24843) (Fission yeast).